The chain runs to 374 residues: Probable carboxylesterase 4, mitochondrial (374 aa).

A mitochondrion-targeting transit peptide spans 1–52 (MLRRITCSSSLASPSLFLRFFRQLPRSYSSPTTIAVSGRNIRRLSTPTTLRC). An Involved in the stabilization of the negatively charged intermediate by the formation of the oxyanion hole motif is present at residues 135–137 (HGG). Active-site residues include Ser-219, Asp-317, and His-349.

It belongs to the 'GDXG' lipolytic enzyme family. Expressed in leaves, stems, flowers and siliques.

Its subcellular location is the mitochondrion. It carries out the reaction a carboxylic ester + H2O = an alcohol + a carboxylate + H(+). Functionally, carboxylesterase acting on esters with varying acyl chain length. The polypeptide is Probable carboxylesterase 4, mitochondrial (CXE4) (Arabidopsis thaliana (Mouse-ear cress)).